The chain runs to 691 residues: Elongation factor G (691 aa).

The region spanning 8 to 283 (KRVRNIGIAA…AVVAYLPAPD (276 aa)) is the tr-type G domain. GTP-binding positions include 17-24 (AHIDAGKT), 81-85 (DTPGH), and 135-138 (NKMD).

This sequence belongs to the TRAFAC class translation factor GTPase superfamily. Classic translation factor GTPase family. EF-G/EF-2 subfamily.

The protein resides in the cytoplasm. In terms of biological role, catalyzes the GTP-dependent ribosomal translocation step during translation elongation. During this step, the ribosome changes from the pre-translocational (PRE) to the post-translocational (POST) state as the newly formed A-site-bound peptidyl-tRNA and P-site-bound deacylated tRNA move to the P and E sites, respectively. Catalyzes the coordinated movement of the two tRNA molecules, the mRNA and conformational changes in the ribosome. The sequence is that of Elongation factor G from Campylobacter lari (strain RM2100 / D67 / ATCC BAA-1060).